The chain runs to 1178 residues: DNA-directed RNA polymerase subunit beta' (1178 aa).

Zn(2+) is bound by residues C60, C62, C75, and C78. Mg(2+) contacts are provided by D450, D452, and D454. C795, C869, C876, and C879 together coordinate Zn(2+).

Belongs to the RNA polymerase beta' chain family. As to quaternary structure, the RNAP catalytic core consists of 2 alpha, 1 beta, 1 beta' and 1 omega subunit. When a sigma factor is associated with the core the holoenzyme is formed, which can initiate transcription. It depends on Mg(2+) as a cofactor. Zn(2+) serves as cofactor.

It catalyses the reaction RNA(n) + a ribonucleoside 5'-triphosphate = RNA(n+1) + diphosphate. Its function is as follows. DNA-dependent RNA polymerase catalyzes the transcription of DNA into RNA using the four ribonucleoside triphosphates as substrates. The polypeptide is DNA-directed RNA polymerase subunit beta' (Clostridium botulinum (strain Okra / Type B1)).